The sequence spans 309 residues: tRNA dimethylallyltransferase (309 aa).

ATP is bound at residue 10–17; sequence GPTASGKT. 12-17 is a binding site for substrate; the sequence is TASGKT. Interaction with substrate tRNA regions lie at residues 35 to 38 and 240 to 245; these read DSAL and RCVGYR.

The protein belongs to the IPP transferase family. Monomer. Mg(2+) serves as cofactor.

It catalyses the reaction adenosine(37) in tRNA + dimethylallyl diphosphate = N(6)-dimethylallyladenosine(37) in tRNA + diphosphate. Its function is as follows. Catalyzes the transfer of a dimethylallyl group onto the adenine at position 37 in tRNAs that read codons beginning with uridine, leading to the formation of N6-(dimethylallyl)adenosine (i(6)A). In Baumannia cicadellinicola subsp. Homalodisca coagulata, this protein is tRNA dimethylallyltransferase.